Reading from the N-terminus, the 405-residue chain is Patatin-like protein 2 (405 aa).

The PNPLA domain occupies 24–230 (LSIDGGGVRG…AANNPTLCAM (207 aa)). Residues 28 to 33 (GGGVRG) carry the GXGXXG motif. The GXSXG signature appears at 66-70 (GTSTG). Catalysis depends on S68, which acts as the Nucleophile. The active-site Proton acceptor is D217. The DGA/G signature appears at 217–219 (DGG).

The protein belongs to the patatin family.

In terms of biological role, possesses non-specific lipolytic acyl hydrolase (LAH) activity. Hydrolyzes phospholipids as well as galactolipids. May play a role in disease resistance. The protein is Patatin-like protein 2 (PLP2) of Oryza sativa subsp. indica (Rice).